Consider the following 354-residue polypeptide: Chaperone protein dnaJ 49 (354 aa).

Positions 99-163 constitute a J domain; sequence DYYAILGLEK…NSRRQFDQVG (65 aa). The chain crosses the membrane as a helical span at residues 237–257; the sequence is CLTIIQILPFFLLLLLAYLPF.

This sequence belongs to the DnaJ family. C/III subfamily.

Its subcellular location is the membrane. Plays a continuous role in plant development probably in the structural organization of compartments. The protein is Chaperone protein dnaJ 49 (ATJ49) of Arabidopsis thaliana (Mouse-ear cress).